A 196-amino-acid chain; its full sequence is Holliday junction branch migration complex subunit RuvA (196 aa).

Residues 1–63 (MLDFIKGEIV…EETHQLFGFI (63 aa)) form a domain I region. Residues 64–142 (DKKERQLFTH…PDNIPSSDTI (79 aa)) are domain II. The flexible linker stretch occupies residues 143-146 (ITNI). A domain III region spans residues 146–196 (ISSNITKEAITALITLGFSQSASQKVVNKIVSNNSSSTTIEQIIKKALKLL).

It belongs to the RuvA family. In terms of assembly, homotetramer. Forms an RuvA(8)-RuvB(12)-Holliday junction (HJ) complex. HJ DNA is sandwiched between 2 RuvA tetramers; dsDNA enters through RuvA and exits via RuvB. An RuvB hexamer assembles on each DNA strand where it exits the tetramer. Each RuvB hexamer is contacted by two RuvA subunits (via domain III) on 2 adjacent RuvB subunits; this complex drives branch migration. In the full resolvosome a probable DNA-RuvA(4)-RuvB(12)-RuvC(2) complex forms which resolves the HJ.

Its subcellular location is the cytoplasm. The RuvA-RuvB-RuvC complex processes Holliday junction (HJ) DNA during genetic recombination and DNA repair, while the RuvA-RuvB complex plays an important role in the rescue of blocked DNA replication forks via replication fork reversal (RFR). RuvA specifically binds to HJ cruciform DNA, conferring on it an open structure. The RuvB hexamer acts as an ATP-dependent pump, pulling dsDNA into and through the RuvAB complex. HJ branch migration allows RuvC to scan DNA until it finds its consensus sequence, where it cleaves and resolves the cruciform DNA. This Azobacteroides pseudotrichonymphae genomovar. CFP2 protein is Holliday junction branch migration complex subunit RuvA.